The following is a 406-amino-acid chain: Enoyl-[acyl-carrier-protein] reductase [NADH] (406 aa).

NAD(+) contacts are provided by residues 48 to 53, 74 to 75, 111 to 112, and 140 to 141; these read GASTGF, FE, DA, and IA. Y226 lines the substrate pocket. Y236 serves as the catalytic Proton donor. NAD(+) contacts are provided by residues K245 and 275-277; that span reads LVT.

The protein belongs to the TER reductase family. In terms of assembly, monomer.

The catalysed reaction is a 2,3-saturated acyl-[ACP] + NAD(+) = a (2E)-enoyl-[ACP] + NADH + H(+). Its pathway is lipid metabolism; fatty acid biosynthesis. Functionally, involved in the final reduction of the elongation cycle of fatty acid synthesis (FAS II). Catalyzes the reduction of a carbon-carbon double bond in an enoyl moiety that is covalently linked to an acyl carrier protein (ACP). The sequence is that of Enoyl-[acyl-carrier-protein] reductase [NADH] from Coxiella burnetii (strain CbuK_Q154) (Coxiella burnetii (strain Q154)).